The following is a 236-amino-acid chain: Small ribosomal subunit protein uS3 (236 aa).

The 69-residue stretch at 39-107 folds into the KH type-2 domain; it reads IRLYVLEELK…ETSLNIVEIH (69 aa).

The protein belongs to the universal ribosomal protein uS3 family. As to quaternary structure, part of the 30S ribosomal subunit. Forms a tight complex with proteins S10 and S14.

In terms of biological role, binds the lower part of the 30S subunit head. Binds mRNA in the 70S ribosome, positioning it for translation. The chain is Small ribosomal subunit protein uS3 from Bartonella quintana (strain Toulouse) (Rochalimaea quintana).